Reading from the N-terminus, the 863-residue chain is Envelope glycoprotein gp160 (863 aa).

A signal peptide spans 1 to 31; that stretch reads MRVMGIRMNYQHLWKWGIMLLGILMTCSVAE. The Extracellular portion of the chain corresponds to 32 to 691; the sequence is DLWVTVYYGV…ITKWLWYIKI (660 aa). C53 and C73 form a disulfide bridge. Residues N87, N129, N136, N142, N143, N159, N163, N194, N199, N209, N246, N274, N288, N301, and N307 are each glycosylated (N-linked (GlcNAc...) asparagine; by host). Cystine bridges form between C118/C217, C125/C208, C130/C160, C230/C259, and C240/C251. The tract at residues 130 to 159 is V1; it reads CTNAGGNKTTNGNNTTNQEEQMMEKGEMKN. The V2 stretch occupies residues 160–208; that stretch reads CSFNITTVISDKKKQVHALFYRLDVVPIDDDNSANTSNTNYTNYRLINC. Residues 308–341 are V3; that stretch reads CTRPDNKITRQSTPIGLGQALYTTRIKGDIRQAY. C308 and C342 form a disulfide bridge. N-linked (GlcNAc...) asparagine; by host glycans are attached at residues N343, N350, and N365. Positions 374–384 are CD4-binding loop; it reads PAGGDPEITTH. Intrachain disulfides connect C388-C452 and C395-C425. Residues 395–425 form a V4 region; the sequence is CNTSRLFNSTWNSSTWNNDTLNSEGTIKLPC. 8 N-linked (GlcNAc...) asparagine; by host glycosylation sites follow: N396, N402, N406, N412, N455, N468, N469, and N472. V5 regions lie at residues 467–478 and 470–478; these read VNNSTNETFRPG and STNETFRPG. Residues 519–539 are fusion peptide; sequence AIGLGAVFLGFLGAAGSTMGA. The interval 581–599 is immunosuppression; it reads KQLQARVLAVESYLKDQQL. The cysteines at positions 605 and 611 are disulfide-linked. 4 N-linked (GlcNAc...) asparagine; by host glycosylation sites follow: N618, N623, N632, and N644. A coiled-coil region spans residues 640–674; it reads REIDNYTGVIYSLIENSQIQQEKNEQDLLQLDKWA. The segment at 669–690 is MPER; binding to GalCer; sequence QLDKWASLWNWFSITKWLWYIK. A helical transmembrane segment spans residues 692–712; it reads FIMIVGGLIGLRIVFTVLSLV. Over 713 to 863 the chain is Cytoplasmic; the sequence is NRVRQGYSPL…VRQGLERALL (151 aa). The short motif at 719-722 is the YXXL motif; contains endocytosis signal element; sequence YSPL. The segment at 729–748 is disordered; it reads PAPRGPDRPEGIEEEGGEQG. C771 carries the S-palmitoyl cysteine; by host lipid modification. Residues 862-863 carry the Di-leucine internalization motif motif; the sequence is LL.

It belongs to the HIV-1 env protein family. As to quaternary structure, the mature envelope protein (Env) consists of a homotrimer of non-covalently associated gp120-gp41 heterodimers. The resulting complex protrudes from the virus surface as a spike. There seems to be as few as 10 spikes on the average virion. Interacts with host CD4, CCR5 and CXCR4. Gp120 also interacts with the C-type lectins CD209/DC-SIGN and CLEC4M/DC-SIGNR (collectively referred to as DC-SIGN(R)). Gp120 and gp41 interact with GalCer. Gp120 interacts with host ITGA4/ITGB7 complex; on CD4+ T-cells, this interaction results in rapid activation of integrin ITGAL/LFA-1, which facilitates efficient cell-to-cell spreading of HIV-1. Gp120 interacts with cell-associated heparan sulfate; this interaction increases virus infectivity on permissive cells and may be involved in infection of CD4- cells. In terms of assembly, the mature envelope protein (Env) consists of a homotrimer of non-covalently associated gp120-gp41 heterodimers. The resulting complex protrudes from the virus surface as a spike. There seems to be as few as 10 spikes on the average virion. Highly glycosylated by host. The high number of glycan on the protein is reffered to as 'glycan shield' because it contributes to hide protein sequence from adaptive immune system. Post-translationally, palmitoylation of the transmembrane protein and of Env polyprotein (prior to its proteolytic cleavage) is essential for their association with host cell membrane lipid rafts. Palmitoylation is therefore required for envelope trafficking to classical lipid rafts, but not for viral replication. In terms of processing, specific enzymatic cleavages in vivo yield mature proteins. Envelope glycoproteins are synthesized as an inactive precursor that is heavily N-glycosylated and processed likely by host cell furin in the Golgi to yield the mature SU and TM proteins. The cleavage site between SU and TM requires the minimal sequence [KR]-X-[KR]-R. About 2 of the 9 disulfide bonds of gp41 are reduced by P4HB/PDI, following binding to CD4 receptor.

The protein resides in the virion membrane. Its subcellular location is the host cell membrane. It is found in the host endosome membrane. Functionally, oligomerizes in the host endoplasmic reticulum into predominantly trimers. In a second time, gp160 transits in the host Golgi, where glycosylation is completed. The precursor is then proteolytically cleaved in the trans-Golgi and thereby activated by cellular furin or furin-like proteases to produce gp120 and gp41. Its function is as follows. Attaches the virus to the host lymphoid cell by binding to the primary receptor CD4. This interaction induces a structural rearrangement creating a high affinity binding site for a chemokine coreceptor like CXCR4 and/or CCR5. Acts as a ligand for CD209/DC-SIGN and CLEC4M/DC-SIGNR, which are respectively found on dendritic cells (DCs), and on endothelial cells of liver sinusoids and lymph node sinuses. These interactions allow capture of viral particles at mucosal surfaces by these cells and subsequent transmission to permissive cells. HIV subverts the migration properties of dendritic cells to gain access to CD4+ T-cells in lymph nodes. Virus transmission to permissive T-cells occurs either in trans (without DCs infection, through viral capture and transmission), or in cis (following DCs productive infection, through the usual CD4-gp120 interaction), thereby inducing a robust infection. In trans infection, bound virions remain infectious over days and it is proposed that they are not degraded, but protected in non-lysosomal acidic organelles within the DCs close to the cell membrane thus contributing to the viral infectious potential during DCs' migration from the periphery to the lymphoid tissues. On arrival at lymphoid tissues, intact virions recycle back to DCs' cell surface allowing virus transmission to CD4+ T-cells. Acts as a class I viral fusion protein. Under the current model, the protein has at least 3 conformational states: pre-fusion native state, pre-hairpin intermediate state, and post-fusion hairpin state. During fusion of viral and target intracellular membranes, the coiled coil regions (heptad repeats) assume a trimer-of-hairpins structure, positioning the fusion peptide in close proximity to the C-terminal region of the ectodomain. The formation of this structure appears to drive apposition and subsequent fusion of viral and target cell membranes. Complete fusion occurs in host cell endosomes and is dynamin-dependent, however some lipid transfer might occur at the plasma membrane. The virus undergoes clathrin-dependent internalization long before endosomal fusion, thus minimizing the surface exposure of conserved viral epitopes during fusion and reducing the efficacy of inhibitors targeting these epitopes. Membranes fusion leads to delivery of the nucleocapsid into the cytoplasm. In Human immunodeficiency virus type 1 group M subtype D (isolate Z84) (HIV-1), this protein is Envelope glycoprotein gp160.